The chain runs to 547 residues: Intercellular adhesion molecule 3 (547 aa).

The first 29 residues, 1-29 (MATMVPSVLWPRACWTLLVCCLLTPGVQG), serve as a signal peptide directing secretion. At 30–485 (QEFLLRVEPQ…VMDIEAGSSH (456 aa)) the chain is on the extracellular side. The region spanning 46-103 (GGSLFVNCSTDCPSSEKIALETSLSKELVASGMGWAAFNLSNVTGNSRILCSVYCNGS) is the Ig-like C2-type 1 domain. N-linked (GlcNAc...) asparagine glycans are attached at residues Asn52, Asn84, Asn87, Asn101, Asn110, and Asn134. Cystine bridges form between Cys53/Cys96 and Cys57/Cys100. Positions 132–197 (GQNFTLRCQV…FSCRTELDMQ (66 aa)) constitute an Ig-like C2-type 2 domain. Residues Cys139 and Cys190 are joined by a disulfide bond. Residues Asn206, Asn264, Asn295, Asn308, Asn320, Asn363, Asn389, Asn453, and Asn457 are each glycosylated (N-linked (GlcNAc...) asparagine). In terms of domain architecture, Ig-like C2-type 3 spans 234–301 (ETSWPVDCTL…IVCNVTLGGE (68 aa)). A disulfide bridge connects residues Cys241 and Cys294. The 54-residue stretch at 329 to 382 (GSTVTVSCMAGARVQVTLDGVPAAAPGQPAQLQLNATESDDGRSFFCSATLEVD) folds into the Ig-like C2-type 4 domain. Cys336 and Cys375 are oxidised to a cystine. Residues 416 to 469 (KTRHVLQCQARGNPYPELRCLKEGSSREVPVGIPFFVNVTHNGTYQCQASSSRG) form the Ig-like C2-type 5 domain. Cys423 and Cys462 are oxidised to a cystine. A helical membrane pass occupies residues 486 to 510 (FVPVFVAVLLTLGVVTIVLALMYVF). Topologically, residues 511 to 547 (REHQRSGSYHVREESTYLPLTSMQPTEAMGEEPSRAE) are cytoplasmic.

This sequence belongs to the immunoglobulin superfamily. ICAM family. In terms of assembly, interacts with moesin/MSN. In terms of processing, upon stimulation by a physiologic stimuli becomes rapidly and transiently phosphorylated on serine residues. Post-translationally, N-glycosylated; glycans consist of a mixture of tri- and tetra-antennary complex-type chains and high-mannose chains. As to expression, leukocytes.

The protein localises to the membrane. ICAM proteins are ligands for the leukocyte adhesion protein LFA-1 (integrin alpha-L/beta-2). ICAM3 is also a ligand for integrin alpha-D/beta-2. In association with integrin alpha-L/beta-2, contributes to apoptotic neutrophil phagocytosis by macrophages. The sequence is that of Intercellular adhesion molecule 3 (ICAM3) from Homo sapiens (Human).